A 496-amino-acid polypeptide reads, in one-letter code: Aldehyde dehydrogenase (496 aa).

Catalysis depends on residues Glu263 and Cys296.

Belongs to the aldehyde dehydrogenase family.

The protein resides in the cytoplasm. The catalysed reaction is an aldehyde + NAD(+) + H2O = a carboxylate + NADH + 2 H(+). The chain is Aldehyde dehydrogenase (CLAH10) from Davidiella tassiana (Mycosphaerella tassiana).